The primary structure comprises 756 residues: Subtilisin-like protease SBT3.9 (756 aa).

The first 25 residues, 1–25 (MSKTILFLALFLSIVLNVQISFVVA), serve as a signal peptide directing secretion. Residues 26-108 (ESKVYVVYLG…VIPNTLYEMT (83 aa)) constitute a propeptide, activation peptide. The Inhibitor I9 domain occupies 29–106 (VYVVYLGEKE…VQVIPNTLYE (78 aa)). One can recognise a Peptidase S8 domain in the interval 112-603 (TWDYLGVSPG…GGLINPEKAV (492 aa)). The Charge relay system role is filled by Asp-142. Residues Asn-175 and Asn-202 are each glycosylated (N-linked (GlcNAc...) asparagine). The active-site Charge relay system is His-218. Residues Asn-233, Asn-357, Asn-395, and Asn-519 are each glycosylated (N-linked (GlcNAc...) asparagine). Residues 386 to 460 (DCEKLSANPN…ELGTDILFYI (75 aa)) form the PA domain. Ser-534 acts as the Charge relay system in catalysis.

This sequence belongs to the peptidase S8 family.

The protein resides in the secreted. In Arabidopsis thaliana (Mouse-ear cress), this protein is Subtilisin-like protease SBT3.9.